The chain runs to 476 residues: 3-isopropylmalate dehydratase large subunit (476 aa).

Cys347, Cys407, and Cys410 together coordinate [4Fe-4S] cluster. The interval Leu418–Thr442 is disordered.

This sequence belongs to the aconitase/IPM isomerase family. LeuC type 1 subfamily. As to quaternary structure, heterodimer of LeuC and LeuD. [4Fe-4S] cluster serves as cofactor.

It catalyses the reaction (2R,3S)-3-isopropylmalate = (2S)-2-isopropylmalate. Its pathway is amino-acid biosynthesis; L-leucine biosynthesis; L-leucine from 3-methyl-2-oxobutanoate: step 2/4. Catalyzes the isomerization between 2-isopropylmalate and 3-isopropylmalate, via the formation of 2-isopropylmaleate. The polypeptide is 3-isopropylmalate dehydratase large subunit (Streptomyces coelicolor (strain ATCC BAA-471 / A3(2) / M145)).